The primary structure comprises 327 residues: 4-diphosphocytidyl-2-C-methyl-D-erythritol kinase (327 aa).

The active site involves lysine 14. 97–107 (PDGAGLGGGSA) contributes to the ATP binding site. Residue aspartate 140 is part of the active site.

This sequence belongs to the GHMP kinase family. IspE subfamily.

It catalyses the reaction 4-CDP-2-C-methyl-D-erythritol + ATP = 4-CDP-2-C-methyl-D-erythritol 2-phosphate + ADP + H(+). It functions in the pathway isoprenoid biosynthesis; isopentenyl diphosphate biosynthesis via DXP pathway; isopentenyl diphosphate from 1-deoxy-D-xylulose 5-phosphate: step 3/6. Catalyzes the phosphorylation of the position 2 hydroxy group of 4-diphosphocytidyl-2C-methyl-D-erythritol. In Oleidesulfovibrio alaskensis (strain ATCC BAA-1058 / DSM 17464 / G20) (Desulfovibrio alaskensis), this protein is 4-diphosphocytidyl-2-C-methyl-D-erythritol kinase.